The following is a 399-amino-acid chain: Exodeoxyribonuclease 7 large subunit (399 aa).

The protein belongs to the XseA family. Heterooligomer composed of large and small subunits.

It is found in the cytoplasm. It carries out the reaction Exonucleolytic cleavage in either 5'- to 3'- or 3'- to 5'-direction to yield nucleoside 5'-phosphates.. Bidirectionally degrades single-stranded DNA into large acid-insoluble oligonucleotides, which are then degraded further into small acid-soluble oligonucleotides. The protein is Exodeoxyribonuclease 7 large subunit of Clostridium acetobutylicum (strain ATCC 824 / DSM 792 / JCM 1419 / IAM 19013 / LMG 5710 / NBRC 13948 / NRRL B-527 / VKM B-1787 / 2291 / W).